The chain runs to 155 residues: 6,7-dimethyl-8-ribityllumazine synthase (155 aa).

Residues phenylalanine 24, 58 to 60 (AFE), and 82 to 84 (VII) each bind 5-amino-6-(D-ribitylamino)uracil. (2S)-2-hydroxy-3-oxobutyl phosphate is bound at residue 87-88 (ST). The active-site Proton donor is histidine 90. Residue phenylalanine 115 coordinates 5-amino-6-(D-ribitylamino)uracil. Arginine 129 contacts (2S)-2-hydroxy-3-oxobutyl phosphate.

It belongs to the DMRL synthase family.

The catalysed reaction is (2S)-2-hydroxy-3-oxobutyl phosphate + 5-amino-6-(D-ribitylamino)uracil = 6,7-dimethyl-8-(1-D-ribityl)lumazine + phosphate + 2 H2O + H(+). The protein operates within cofactor biosynthesis; riboflavin biosynthesis; riboflavin from 2-hydroxy-3-oxobutyl phosphate and 5-amino-6-(D-ribitylamino)uracil: step 1/2. Catalyzes the formation of 6,7-dimethyl-8-ribityllumazine by condensation of 5-amino-6-(D-ribitylamino)uracil with 3,4-dihydroxy-2-butanone 4-phosphate. This is the penultimate step in the biosynthesis of riboflavin. This chain is 6,7-dimethyl-8-ribityllumazine synthase, found in Chlorobium phaeobacteroides (strain DSM 266 / SMG 266 / 2430).